Consider the following 291-residue polypeptide: N-acetylmannosamine kinase (291 aa).

ATP-binding positions include 5–12 (AIDIGGTK) and 132–139 (GVGGGVVC). Positions 156, 166, 168, and 173 each coordinate Zn(2+).

Belongs to the ROK (NagC/XylR) family. NanK subfamily. In terms of assembly, homodimer.

The enzyme catalyses an N-acyl-D-mannosamine + ATP = an N-acyl-D-mannosamine 6-phosphate + ADP + H(+). The protein operates within amino-sugar metabolism; N-acetylneuraminate degradation; D-fructose 6-phosphate from N-acetylneuraminate: step 2/5. Its function is as follows. Catalyzes the phosphorylation of N-acetylmannosamine (ManNAc) to ManNAc-6-P. This is N-acetylmannosamine kinase from Salmonella gallinarum (strain 287/91 / NCTC 13346).